We begin with the raw amino-acid sequence, 108 residues long: UPF0060 membrane protein SA2130 (108 aa).

4 helical membrane-spanning segments follow: residues 5 to 25 (IFIF…IWLW), 31 to 51 (SSLV…IATF), 60 to 80 (VYAA…MVVD), and 86 to 106 (KYDV…LLPS).

It belongs to the UPF0060 family.

The protein localises to the cell membrane. The polypeptide is UPF0060 membrane protein SA2130 (Staphylococcus aureus (strain N315)).